Consider the following 430-residue polypeptide: MDRIRIVGGNELHGVIPISGAKNAALPLMIASLLTDDTLTLENVPHLADVEQLIRILGNHGADISVNGRRERQGESYARTVHFTSRNIVSTTAPYELVSKMRASFWVIGPLLAREGKARVSLPGGCAIGTRPVDLFIEGLAALGANIEIDGGYVNATAPAGGLIGARYVFPKVSVGATHVLMMAATLANGTTVLGNAAREPEVVDLAKCLNAMGAKISGQGTSTVTIEGVRSLSGARHRVLPDRIETGTYAMAVAMAGGDVILEDTEASLLDTALEAIRRAGAQISETNSGIRIVRNGAGIKPVDIVTDPFPGFPTDLQAQFMGLMTRSSGVSHITETIFENRFMHVQELARLGAKISLSGQTAKVEGVSRLKGAPVMATDLRASVSLVIAGLAAEGETMVSRVYHLDRGFERLEEKLTRCGAHVERVSD.

22–23 serves as a coordination point for phosphoenolpyruvate; that stretch reads KN. R102 serves as a coordination point for UDP-N-acetyl-alpha-D-glucosamine. The active-site Proton donor is C126. C126 carries the 2-(S-cysteinyl)pyruvic acid O-phosphothioketal modification. Residues 131–135, 172–175, D317, and I339 contribute to the UDP-N-acetyl-alpha-D-glucosamine site; these read RPVDL and KVSV.

This sequence belongs to the EPSP synthase family. MurA subfamily.

Its subcellular location is the cytoplasm. The catalysed reaction is phosphoenolpyruvate + UDP-N-acetyl-alpha-D-glucosamine = UDP-N-acetyl-3-O-(1-carboxyvinyl)-alpha-D-glucosamine + phosphate. The protein operates within cell wall biogenesis; peptidoglycan biosynthesis. Cell wall formation. Adds enolpyruvyl to UDP-N-acetylglucosamine. The protein is UDP-N-acetylglucosamine 1-carboxyvinyltransferase of Rhizobium meliloti (strain 1021) (Ensifer meliloti).